We begin with the raw amino-acid sequence, 48 residues long: Hemoglobin subunit beta-B (48 aa).

The region spanning 2–48 (EWTDAERGAILSLWGKIDPDELGPALLARXXLVYXXTQRYFASFGDL) is the Globin domain.

This sequence belongs to the globin family. Heterotetramer of two alpha chains and two beta chains. As to expression, red blood cells.

In terms of biological role, involved in oxygen transport from gills to the various peripheral tissues. The chain is Hemoglobin subunit beta-B from Catostomus clarkii (Desert sucker).